Reading from the N-terminus, the 575-residue chain is Reverse gyrse subunit B (575 aa).

The RG N-terminal-type; degenerate zinc-finger motif lies at methionine 1–glutamate 39. Residues glutamine 83 and alanine 100–threonine 107 each bind ATP. The 161-residue stretch at phenylalanine 87–glutamate 247 folds into the Helicase ATP-binding domain. Positions aspartate 204–aspartate 207 match the DEAD box motif. The Helicase C-terminal domain occupies glutamine 316–glutamate 465.

It belongs to the DEAD box helicase family. DDVD subfamily. In terms of assembly, heterodimer of an RgyA and RgyB subunit.

It localises to the cytoplasm. The enzyme catalyses ATP + H2O = ADP + phosphate + H(+). Modifies the topological state of DNA by introducing positive supercoils in an ATP-dependent process. Binds to single-stranded DNA, transiently cleaves and then rejoins the end, introducing a positive supercoil in the process. The scissile phosphodiester is attacked by the catalytic tyrosine of the enzyme, resulting in the formation of a DNA-(5'-phosphotyrosyl)-enzyme intermediate. Probably involved in rewinding DNA strands in regions of the chromosome that have opened up to allow replication, transcription, DNA repair or for DNA protection. Reconstituted holoenzyme binds dsDNA a bit better than ssDNA, this subunit preferentially binds dsDNA. In isolation this subunit has DNA-stimulated ATPase activity that is stimulated by topoisomerase-domain containing RgyA. This subunit inhibits the relaxation activity of the topoisomerase subunit while promoting positive supercoiling. This Nanoarchaeum equitans (strain Kin4-M) protein is Reverse gyrse subunit B.